An 883-amino-acid polypeptide reads, in one-letter code: Phosphoenolpyruvate carboxylase (883 aa).

Active-site residues include H138 and K546.

It belongs to the PEPCase type 1 family. The cofactor is Mg(2+).

The enzyme catalyses oxaloacetate + phosphate = phosphoenolpyruvate + hydrogencarbonate. Forms oxaloacetate, a four-carbon dicarboxylic acid source for the tricarboxylic acid cycle. This Salmonella paratyphi A (strain ATCC 9150 / SARB42) protein is Phosphoenolpyruvate carboxylase.